Here is a 264-residue protein sequence, read N- to C-terminus: Small ribosomal subunit protein mS23 (264 aa).

The segment at A233 to F264 is disordered.

Belongs to the mitochondrion-specific ribosomal protein mS23 family. In terms of assembly, component of the mitochondrial small ribosomal subunit. Mature mitochondrial ribosomes consist of a small (37S) and a large (54S) subunit. The 37S subunit contains at least 33 different proteins and 1 molecule of RNA (15S). The 54S subunit contains at least 45 different proteins and 1 molecule of RNA (21S).

It localises to the mitochondrion. The polypeptide is Small ribosomal subunit protein mS23 (RSM25) (Saccharomyces cerevisiae (strain YJM789) (Baker's yeast)).